Consider the following 69-residue polypeptide: DNA gyrase inhibitor YacG (69 aa).

Residues C9, C12, C28, and C32 each contribute to the Zn(2+) site. Residues 48–69 (PVSPDAEDELFSGDLEAPHRGH) form a disordered region.

This sequence belongs to the DNA gyrase inhibitor YacG family. As to quaternary structure, interacts with GyrB. Zn(2+) serves as cofactor.

Its function is as follows. Inhibits all the catalytic activities of DNA gyrase by preventing its interaction with DNA. Acts by binding directly to the C-terminal domain of GyrB, which probably disrupts DNA binding by the gyrase. The chain is DNA gyrase inhibitor YacG from Pseudomonas syringae pv. syringae (strain B728a).